The following is a 427-amino-acid chain: Isocitrate dehydrogenase [NADP] (427 aa).

Residue Thr-114 participates in NADP(+) binding. Positions 123, 125, 129, 139, and 163 each coordinate D-threo-isocitrate. Asp-317 contacts Mg(2+). NADP(+)-binding positions include 349 to 355 (HGTAPKY), Asn-362, Tyr-401, and Arg-405.

The protein belongs to the isocitrate and isopropylmalate dehydrogenases family. As to quaternary structure, homodimer. Requires Mg(2+) as cofactor. The cofactor is Mn(2+).

It carries out the reaction D-threo-isocitrate + NADP(+) = 2-oxoglutarate + CO2 + NADPH. Catalyzes the oxidative decarboxylation of isocitrate to 2-oxoglutarate and carbon dioxide with the concomitant reduction of NADP(+). The protein is Isocitrate dehydrogenase [NADP] (icd) of Coxiella burnetii (strain RSA 493 / Nine Mile phase I).